A 342-amino-acid polypeptide reads, in one-letter code: Protein RecA 1 (342 aa).

68-75 (GNESSGKT) contacts ATP.

The protein belongs to the RecA family.

Its subcellular location is the cytoplasm. Functionally, can catalyze the hydrolysis of ATP in the presence of single-stranded DNA, the ATP-dependent uptake of single-stranded DNA by duplex DNA, and the ATP-dependent hybridization of homologous single-stranded DNAs. It interacts with LexA causing its activation and leading to its autocatalytic cleavage. In Myxococcus xanthus, this protein is Protein RecA 1.